We begin with the raw amino-acid sequence, 286 residues long: Flagellin FlaB2 (286 aa).

It belongs to the bacterial flagellin family. As to quaternary structure, the flagellum consists of an outer layer composed of repeating units of FlaA around a core that contains several antigenically related polypeptides. Interacts with FliW; a synthetic peptide of FlaB1 (residues 229-247) partially blocks binding of this protein to FliW.

It is found in the periplasmic flagellum. Its subcellular location is the periplasm. In terms of biological role, component of the core of the flagella. This Treponema pallidum (strain Nichols) protein is Flagellin FlaB2.